Here is a 146-residue protein sequence, read N- to C-terminus: DNA utilization protein HofO (146 aa).

A helical transmembrane segment spans residues 20-37 (WAFWLLMLVTLIFLSSTH).

The protein resides in the cell inner membrane. In terms of biological role, required for the use of extracellular DNA as a nutrient. The polypeptide is DNA utilization protein HofO (hofO) (Escherichia coli (strain K12)).